Here is a 287-residue protein sequence, read N- to C-terminus: Transmembrane protein 71 (287 aa).

A disordered region spans residues 1–25 (MYRDSPLMSTPVANDSRSDEGPSGK). Transmembrane regions (helical) follow at residues 218–238 (AGLM…LVIS) and 244–264 (FVGG…IAYV).

The protein belongs to the TMEM71 family.

It is found in the membrane. In Mus musculus (Mouse), this protein is Transmembrane protein 71 (Tmem71).